We begin with the raw amino-acid sequence, 428 residues long: 4-hydroxy-3-methylbut-2-en-1-yl diphosphate synthase (flavodoxin) (428 aa).

Residues Cys300, Cys303, Cys346, and Glu353 each coordinate [4Fe-4S] cluster.

The protein belongs to the IspG family. [4Fe-4S] cluster is required as a cofactor.

The catalysed reaction is (2E)-4-hydroxy-3-methylbut-2-enyl diphosphate + oxidized [flavodoxin] + H2O + 2 H(+) = 2-C-methyl-D-erythritol 2,4-cyclic diphosphate + reduced [flavodoxin]. The protein operates within isoprenoid biosynthesis; isopentenyl diphosphate biosynthesis via DXP pathway; isopentenyl diphosphate from 1-deoxy-D-xylulose 5-phosphate: step 5/6. In terms of biological role, converts 2C-methyl-D-erythritol 2,4-cyclodiphosphate (ME-2,4cPP) into 1-hydroxy-2-methyl-2-(E)-butenyl 4-diphosphate. In Methylobacillus flagellatus (strain ATCC 51484 / DSM 6875 / VKM B-1610 / KT), this protein is 4-hydroxy-3-methylbut-2-en-1-yl diphosphate synthase (flavodoxin).